The primary structure comprises 546 residues: Light-independent protochlorophyllide reductase subunit B (546 aa).

[4Fe-4S] cluster is bound at residue aspartate 36. Catalysis depends on aspartate 287, which acts as the Proton donor. Residue 422-423 (GL) participates in substrate binding. Residues 443 to 501 (PSHLSAHRPTGEAVGDAVGEPPAAPRDQAAPAATLDGSAAQSDPARTTPPGAPSWEDSA) form a disordered region.

This sequence belongs to the ChlB/BchB/BchZ family. In terms of assembly, protochlorophyllide reductase is composed of three subunits; BchL, BchN and BchB. Forms a heterotetramer of two BchB and two BchN subunits. Requires [4Fe-4S] cluster as cofactor.

The enzyme catalyses chlorophyllide a + oxidized 2[4Fe-4S]-[ferredoxin] + 2 ADP + 2 phosphate = protochlorophyllide a + reduced 2[4Fe-4S]-[ferredoxin] + 2 ATP + 2 H2O. It functions in the pathway porphyrin-containing compound metabolism; bacteriochlorophyll biosynthesis (light-independent). Component of the dark-operative protochlorophyllide reductase (DPOR) that uses Mg-ATP and reduced ferredoxin to reduce ring D of protochlorophyllide (Pchlide) to form chlorophyllide a (Chlide). This reaction is light-independent. The NB-protein (BchN-BchB) is the catalytic component of the complex. The chain is Light-independent protochlorophyllide reductase subunit B from Rhodospirillum rubrum (strain ATCC 11170 / ATH 1.1.1 / DSM 467 / LMG 4362 / NCIMB 8255 / S1).